Here is a 500-residue protein sequence, read N- to C-terminus: Probable cytosol aminopeptidase (500 aa).

Residues lysine 265 and aspartate 270 each coordinate Mn(2+). Lysine 277 is an active-site residue. Positions 288, 347, and 349 each coordinate Mn(2+). Arginine 351 is a catalytic residue.

It belongs to the peptidase M17 family. The cofactor is Mn(2+).

The protein localises to the cytoplasm. The enzyme catalyses Release of an N-terminal amino acid, Xaa-|-Yaa-, in which Xaa is preferably Leu, but may be other amino acids including Pro although not Arg or Lys, and Yaa may be Pro. Amino acid amides and methyl esters are also readily hydrolyzed, but rates on arylamides are exceedingly low.. The catalysed reaction is Release of an N-terminal amino acid, preferentially leucine, but not glutamic or aspartic acids.. Functionally, presumably involved in the processing and regular turnover of intracellular proteins. Catalyzes the removal of unsubstituted N-terminal amino acids from various peptides. This Bdellovibrio bacteriovorus (strain ATCC 15356 / DSM 50701 / NCIMB 9529 / HD100) protein is Probable cytosol aminopeptidase.